Here is a 257-residue protein sequence, read N- to C-terminus: Protein-tyrosine-phosphatase IBR5 (257 aa).

One can recognise a Tyrosine-protein phosphatase domain in the interval 49–185 (FPSEILPEFL…LQEFEQGIFG (137 aa)). Cysteine 129 serves as the catalytic Phosphocysteine intermediate. Residues 235–257 (QEFTFGATPPKPTTGGDIAMDGS) are disordered.

The protein belongs to the protein-tyrosine phosphatase family. As to quaternary structure, interacts with SKP1A/ASK1 and with MPK12. As to expression, expressed in root tips and vasculature, cotyledons, stems, leaves vasculature and hydathodes, flowers, siliques, and seeds.

It localises to the nucleus. The catalysed reaction is O-phospho-L-tyrosyl-[protein] + H2O = L-tyrosyl-[protein] + phosphate. Required for the transduction of auxin and abscisic acid (ABA) signaling pathways. Dephosphorylates and inactivates the MAP kinase MPK12. The sequence is that of Protein-tyrosine-phosphatase IBR5 (IBR5) from Arabidopsis thaliana (Mouse-ear cress).